A 167-amino-acid polypeptide reads, in one-letter code: NADPH-dependent 7-cyano-7-deazaguanine reductase (167 aa).

Positions 1 to 24 are disordered; it reads MTTRSQDQTRDLKVLGTGRLTSPE. Cys-57 (thioimide intermediate) is an active-site residue. The active-site Proton donor is Asp-64. Substrate contacts are provided by residues 79–81 and 98–99; these read VES and ME.

The protein belongs to the GTP cyclohydrolase I family. QueF type 1 subfamily.

The protein localises to the cytoplasm. The enzyme catalyses 7-aminomethyl-7-carbaguanine + 2 NADP(+) = 7-cyano-7-deazaguanine + 2 NADPH + 3 H(+). It participates in tRNA modification; tRNA-queuosine biosynthesis. Catalyzes the NADPH-dependent reduction of 7-cyano-7-deazaguanine (preQ0) to 7-aminomethyl-7-deazaguanine (preQ1). The polypeptide is NADPH-dependent 7-cyano-7-deazaguanine reductase (Desulfovibrio desulfuricans (strain ATCC 27774 / DSM 6949 / MB)).